The sequence spans 1081 residues: Isoleucine--tRNA ligase (1081 aa).

The short motif at 53–63 is the 'HIGH' region element; the sequence is PFATGLPHYGN. The 'KMSKS' region motif lies at 607–611; that stretch reads KMSKS. Lys610 provides a ligand contact to ATP.

It belongs to the class-I aminoacyl-tRNA synthetase family.

The enzyme catalyses tRNA(Ile) + L-isoleucine + ATP = L-isoleucyl-tRNA(Ile) + AMP + diphosphate. This chain is Isoleucine--tRNA ligase (ILSA), found in Tetrahymena thermophila.